Consider the following 163-residue polypeptide: CDP-archaeol synthase (163 aa).

The next 5 membrane-spanning stretches (helical) occupy residues 4 to 24 (LLLG…APFI), 52 to 72 (LLLS…FLGI), 75 to 95 (IIIG…GAFI), 107 to 127 (APIL…ISFN), and 128 to 148 (VNLN…LHMF).

The protein belongs to the CDP-archaeol synthase family. Mg(2+) is required as a cofactor.

Its subcellular location is the cell membrane. The enzyme catalyses 2,3-bis-O-(geranylgeranyl)-sn-glycerol 1-phosphate + CTP + H(+) = CDP-2,3-bis-O-(geranylgeranyl)-sn-glycerol + diphosphate. Its pathway is membrane lipid metabolism; glycerophospholipid metabolism. Catalyzes the formation of CDP-2,3-bis-(O-geranylgeranyl)-sn-glycerol (CDP-archaeol) from 2,3-bis-(O-geranylgeranyl)-sn-glycerol 1-phosphate (DGGGP) and CTP. This reaction is the third ether-bond-formation step in the biosynthesis of archaeal membrane lipids. This chain is CDP-archaeol synthase, found in Sulfolobus acidocaldarius (strain ATCC 33909 / DSM 639 / JCM 8929 / NBRC 15157 / NCIMB 11770).